The chain runs to 85 residues: Large ribosomal subunit protein bL27 (85 aa).

Residues 1–20 (MAHKKAGGSTRNGRDSEAKR) form a disordered region.

Belongs to the bacterial ribosomal protein bL27 family.

The sequence is that of Large ribosomal subunit protein bL27 from Escherichia coli O139:H28 (strain E24377A / ETEC).